The chain runs to 118 residues: Transcription factor PAR2 (118 aa).

The interval 1 to 59 is disordered; sequence MEKTLATSHTKRSSPPSPSSAVNTSSTGFNRRTRQRLSDATASVSETDVEDEDEDEEGV. The span at 19–30 shows a compositional bias: polar residues; that stretch reads SSAVNTSSTGFN. The 50-residue stretch at 43 to 92 folds into the bHLH domain; that stretch reads SVSETDVEDEDEDEEGVEEKIEALQTIVPGGTELGVDALFEETASYILAL. A compositionally biased stretch (acidic residues) spans 47–59; sequence TDVEDEDEDEEGV.

It belongs to the bHLH protein family. Homodimer.

The protein localises to the nucleus. Its function is as follows. Atypical bHLH transcription factor that acts as a negative regulator of a variety of shade avoidance syndrome (SAS) responses, including seedling elongation and photosynthetic pigment accumulation. Acts as a direct transcriptional repressor of two auxin-responsive genes, SAUR15 and SAUR68. May function in integrating shade and hormone transcriptional networks in response to light and auxin changes. The protein is Transcription factor PAR2 (PAR2) of Arabidopsis thaliana (Mouse-ear cress).